Consider the following 107-residue polypeptide: Protein Rev (107 aa).

Phosphoserine; by host CK2 occurs at positions 5 and 8. The interval 18 to 26 is homomultimerization; the sequence is IIKILYQSN. Disordered regions lie at residues 26 to 48 and 81 to 107; these read NPYPTPEGTRQARRNRRRRWRAR and LNLDCSEDSGTSGTQQSQGTTEGVGNP. The Nuclear localization signal and RNA-binding (RRE) signature appears at 34–50; sequence TRQARRNRRRRWRARQR. Positions 36–48 are enriched in basic residues; that stretch reads QARRNRRRRWRAR. Residues 73–84 carry the Nuclear export signal and binding to XPO1 motif; sequence LQLPPLERLNLD. Residues 89–101 show a composition bias toward low complexity; sequence SGTSGTQQSQGTT. Ser92 bears the Phosphoserine; by host mark.

Belongs to the HIV-1 REV protein family. As to quaternary structure, homomultimer; when bound to the RRE. Multimeric assembly is essential for activity and may involve XPO1. Binds to human KPNB1, XPO1, TNPO1, RANBP5 and IPO7. Interacts with the viral Integrase. Interacts with human KHDRBS1. Interacts with human NAP1; this interaction decreases Rev multimerization and stimulates its activity. Interacts with human DEAD-box helicases DDX3 and DDX24; these interactions may serve for viral RNA export to the cytoplasm and packaging, respectively. Interacts with human PSIP1; this interaction may inhibit HIV-1 DNA integration by promoting dissociation of the Integrase-LEDGF/p75 complex. In terms of processing, asymmetrically arginine dimethylated at one site by host PRMT6. Methylation impairs the RNA-binding activity and export of viral RNA from the nucleus to the cytoplasm. Phosphorylated by protein kinase CK2. Presence of, and maybe binding to the N-terminus of the regulatory beta subunit of CK2 is necessary for CK2-mediated Rev's phosphorylation.

Its subcellular location is the host nucleus. It is found in the host nucleolus. The protein resides in the host cytoplasm. Escorts unspliced or incompletely spliced viral pre-mRNAs (late transcripts) out of the nucleus of infected cells. These pre-mRNAs carry a recognition sequence called Rev responsive element (RRE) located in the env gene, that is not present in fully spliced viral mRNAs (early transcripts). This function is essential since most viral proteins are translated from unspliced or partially spliced pre-mRNAs which cannot exit the nucleus by the pathway used by fully processed cellular mRNAs. Rev itself is translated from a fully spliced mRNA that readily exits the nucleus. Rev's nuclear localization signal (NLS) binds directly to KPNB1/Importin beta-1 without previous binding to KPNA1/Importin alpha-1. KPNB1 binds to the GDP bound form of RAN (Ran-GDP) and targets Rev to the nucleus. In the nucleus, the conversion from Ran-GDP to Ran-GTP dissociates Rev from KPNB1 and allows Rev's binding to the RRE in viral pre-mRNAs. Rev multimerization on the RRE via cooperative assembly exposes its nuclear export signal (NES) to the surface. Rev can then form a complex with XPO1/CRM1 and Ran-GTP, leading to nuclear export of the complex. Conversion from Ran-GTP to Ran-GDP mediates dissociation of the Rev/RRE/XPO1/RAN complex, so that Rev can return to the nucleus for a subsequent round of export. Beside KPNB1, also seems to interact with TNPO1/Transportin-1, RANBP5/IPO5 and IPO7/RANBP7 for nuclear import. The nucleoporin-like HRB/RIP is an essential cofactor that probably indirectly interacts with Rev to release HIV RNAs from the perinuclear region to the cytoplasm. This is Protein Rev from Homo sapiens (Human).